The following is a 540-amino-acid chain: Probable G-protein coupled receptor 75 (540 aa).

The Extracellular segment spans residues 1 to 46; it reads MNTSAPLQNVPNATLLNMPPLHGGNSTSLQEGLRDFIHTATLVTCT. N-linked (GlcNAc...) asparagine glycans are attached at residues asparagine 2 and asparagine 25. Residues 47-67 form a helical membrane-spanning segment; sequence FLLAIIFCLGSYGNFIVFLSF. At 68 to 86 the chain is on the cytoplasmic side; it reads FDPSFRKFRTNFDFMILNL. Residues 87 to 107 form a helical membrane-spanning segment; sequence SFCDLFICGVTAPMFTFVLFF. Residues 108–120 are Extracellular-facing; it reads SSASSIPDSFCFT. A helical membrane pass occupies residues 121–141; it reads FHLTSSGFVIMSLKMVAVIAL. Over 142–160 the chain is Cytoplasmic; that stretch reads HRLRMVMGKQPNCTASFSC. The helical transmembrane segment at 161–181 threads the bilayer; it reads ILLLTLLLWATSFTLATLATL. Residues 182–205 are Extracellular-facing; the sequence is RTNKSHLCLPMSSLMDGEGKAILS. The N-linked (GlcNAc...) asparagine glycan is linked to asparagine 184. Residues 206 to 226 traverse the membrane as a helical segment; that stretch reads LYVVDFTFCVAVVSVSYIMIA. Residues 227–318 are Cytoplasmic-facing; it reads QTLRKNAQVK…INFSTAKDSK (92 aa). Residues 319 to 339 form a helical membrane-spanning segment; the sequence is AVVTCVVIVLSVLVCCLPLGI. Topologically, residues 340-350 are extracellular; the sequence is SLVQMVLSDNG. A helical transmembrane segment spans residues 351-371; that stretch reads SFILYQFELFGFTLIFFKSGL. Residues 372 to 540 are Cytoplasmic-facing; it reads NPFIYSRNSA…SAKQIPIPSV (169 aa). Residues 443–475 are disordered; sequence DQACGPSHSKESAASPKVSAGHQPCGQSSSTPI.

Belongs to the G-protein coupled receptor 1 family. In terms of tissue distribution, highly expressed in brain and heart. Also detected in skeletal muscle, liver and kidney. Also expressed by islet cells (at protein level).

The protein resides in the cell membrane. Functionally, g protein-coupled receptor that is activated by the chemokine CCL5/RANTES. Probably coupled to heterotrimeric Gq proteins, it stimulates inositol trisphosphate production and calcium mobilization upon activation. Together with CCL5/RANTES, may play a role in neuron survival through activation of a downstream signaling pathway involving the PI3, Akt and MAP kinases. CCL5/RANTES may also regulate insulin secretion by pancreatic islet cells through activation of this receptor. This chain is Probable G-protein coupled receptor 75 (Gpr75), found in Mus musculus (Mouse).